Reading from the N-terminus, the 178-residue chain is Small ribosomal subunit protein uS4 (178 aa).

The region spanning 104–166 is the S4 RNA-binding domain; sequence RRLQTIVFRK…SNSPMASENH (63 aa). The tract at residues 158 to 178 is disordered; it reads NSPMASENHPERTAATSEENQ.

It belongs to the universal ribosomal protein uS4 family. As to quaternary structure, part of the 30S ribosomal subunit. Contacts protein S5. The interaction surface between S4 and S5 is involved in control of translational fidelity.

One of the primary rRNA binding proteins, it binds directly to 16S rRNA where it nucleates assembly of the body of the 30S subunit. In terms of biological role, with S5 and S12 plays an important role in translational accuracy. This is Small ribosomal subunit protein uS4 from Methanococcus maripaludis (strain DSM 14266 / JCM 13030 / NBRC 101832 / S2 / LL).